The following is a 476-amino-acid chain: Glycogen synthase (476 aa).

Residue Lys15 participates in ADP-alpha-D-glucose binding.

Belongs to the glycosyltransferase 1 family. Bacterial/plant glycogen synthase subfamily.

The catalysed reaction is [(1-&gt;4)-alpha-D-glucosyl](n) + ADP-alpha-D-glucose = [(1-&gt;4)-alpha-D-glucosyl](n+1) + ADP + H(+). It functions in the pathway glycan biosynthesis; glycogen biosynthesis. Its function is as follows. Synthesizes alpha-1,4-glucan chains using ADP-glucose. In Streptococcus equi subsp. zooepidemicus (strain H70), this protein is Glycogen synthase.